The following is a 505-amino-acid chain: Protein nucleotidyltransferase YdiU (505 aa).

ATP-binding residues include Gly102, Gly104, Arg105, Lys125, Asp137, Gly138, Arg188, and Arg195. The active-site Proton acceptor is the Asp264. Mg(2+) contacts are provided by Asn265 and Asp274. Asp274 is a binding site for ATP. The disordered stretch occupies residues 485–505 (FADYGKPPAPGEEVQQTFCGT).

The protein belongs to the SELO family. Requires Mg(2+) as cofactor. The cofactor is Mn(2+).

It catalyses the reaction L-seryl-[protein] + ATP = 3-O-(5'-adenylyl)-L-seryl-[protein] + diphosphate. The catalysed reaction is L-threonyl-[protein] + ATP = 3-O-(5'-adenylyl)-L-threonyl-[protein] + diphosphate. It carries out the reaction L-tyrosyl-[protein] + ATP = O-(5'-adenylyl)-L-tyrosyl-[protein] + diphosphate. The enzyme catalyses L-histidyl-[protein] + UTP = N(tele)-(5'-uridylyl)-L-histidyl-[protein] + diphosphate. It catalyses the reaction L-seryl-[protein] + UTP = O-(5'-uridylyl)-L-seryl-[protein] + diphosphate. The catalysed reaction is L-tyrosyl-[protein] + UTP = O-(5'-uridylyl)-L-tyrosyl-[protein] + diphosphate. Functionally, nucleotidyltransferase involved in the post-translational modification of proteins. It can catalyze the addition of adenosine monophosphate (AMP) or uridine monophosphate (UMP) to a protein, resulting in modifications known as AMPylation and UMPylation. This chain is Protein nucleotidyltransferase YdiU, found in Nitrobacter hamburgensis (strain DSM 10229 / NCIMB 13809 / X14).